The sequence spans 163 residues: MASEHSFDISAALDKQELKNAFEQAKKELDSRYDLKGIKCEIDLSEKESIFKLSSSSEGKLDVLKDIVISKLIKRGINPKAIKELSRESGAMFRLNLKANDAIDSENAKKINKVIKDSKLKVNSSIRGEEIRVAAKQIDDLQAVMKLVKELDLELNISFKNLK.

The protein belongs to the YajQ family.

Functionally, nucleotide-binding protein. This is Nucleotide-binding protein Cj0374 from Campylobacter jejuni subsp. jejuni serotype O:2 (strain ATCC 700819 / NCTC 11168).